The sequence spans 225 residues: 7-carboxy-7-deazaguanine synthase (225 aa).

Substrate contacts are provided by residues 12–14 and Arg-27; that span reads IQG. The Radical SAM core domain maps to 18–225; sequence YIGVRQLFVR…PQVHKYLGVR (208 aa). The [4Fe-4S] cluster site is built by Cys-31, Cys-35, and Cys-38. Thr-40 lines the Mg(2+) pocket. A substrate-binding site is contributed by Thr-80. Gly-82 provides a ligand contact to S-adenosyl-L-methionine.

The protein belongs to the radical SAM superfamily. 7-carboxy-7-deazaguanine synthase family. In terms of assembly, homodimer. [4Fe-4S] cluster is required as a cofactor. Requires S-adenosyl-L-methionine as cofactor. Mg(2+) serves as cofactor.

It carries out the reaction 6-carboxy-5,6,7,8-tetrahydropterin + H(+) = 7-carboxy-7-deazaguanine + NH4(+). Its pathway is purine metabolism; 7-cyano-7-deazaguanine biosynthesis. Its function is as follows. Catalyzes the complex heterocyclic radical-mediated conversion of 6-carboxy-5,6,7,8-tetrahydropterin (CPH4) to 7-carboxy-7-deazaguanine (CDG), a step common to the biosynthetic pathways of all 7-deazapurine-containing compounds. The sequence is that of 7-carboxy-7-deazaguanine synthase from Archaeoglobus fulgidus (strain ATCC 49558 / DSM 4304 / JCM 9628 / NBRC 100126 / VC-16).